Here is a 586-residue protein sequence, read N- to C-terminus: Phosphomethylpyrimidine synthase (586 aa).

Positions 1-59 (MKQSVSAEQIELKSSLPGSKKVYVDGPREGMKVPMREIEQSDTNGVPNPPIRVYDTSGP) are disordered. Positions 22 to 39 (VYVDGPREGMKVPMREIE) are enriched in basic and acidic residues. Substrate-binding positions include Asn193, Met222, Tyr251, His287, 307–309 (SRG), 348–351 (DGLR), and Glu387. His391 provides a ligand contact to Zn(2+). Tyr414 serves as a coordination point for substrate. His455 contributes to the Zn(2+) binding site. Residues Cys535, Cys538, and Cys543 each coordinate [4Fe-4S] cluster.

Belongs to the ThiC family. [4Fe-4S] cluster serves as cofactor.

The enzyme catalyses 5-amino-1-(5-phospho-beta-D-ribosyl)imidazole + S-adenosyl-L-methionine = 4-amino-2-methyl-5-(phosphooxymethyl)pyrimidine + CO + 5'-deoxyadenosine + formate + L-methionine + 3 H(+). It participates in cofactor biosynthesis; thiamine diphosphate biosynthesis. Functionally, catalyzes the synthesis of the hydroxymethylpyrimidine phosphate (HMP-P) moiety of thiamine from aminoimidazole ribotide (AIR) in a radical S-adenosyl-L-methionine (SAM)-dependent reaction. In Bacillus cereus (strain Q1), this protein is Phosphomethylpyrimidine synthase.